The following is a 413-amino-acid chain: Divalent metal cation transporter MntH (413 aa).

Topologically, residues 1–19 (MTDNRVENSSGRAARKLRL) are cytoplasmic. The helical transmembrane segment at 20–39 (ALMGPAFIAAIGYIDPGNFA) threads the bilayer. Over 40-51 (TNIQAGASFGYQ) the chain is Periplasmic. Residues 52-71 (LLWVVVWANLMAMLIQILSA) traverse the membrane as a helical segment. Topologically, residues 72–95 (KLGIATGKNLAEQIRDHYPRPVVW) are cytoplasmic. A helical transmembrane segment spans residues 96 to 118 (FYWVQAEIIAMATDLAEFIGAAI). The Periplasmic portion of the chain corresponds to 119–125 (GFKLILG). The chain crosses the membrane as a helical span at residues 126 to 145 (VSLLQGAVLTGIATFLILML). Over 146-155 (QRRGQKPLEK) the chain is Cytoplasmic. A helical membrane pass occupies residues 156–175 (VIGGLLLFVAAAYIVELFFS). Residues 176–196 (QPDMAQLGKGMVIPALPNPEA) are Periplasmic-facing. A helical transmembrane segment spans residues 197–220 (VFLAAGVLGATIMPHVIYLHSSLT). The Cytoplasmic portion of the chain corresponds to 221–238 (QHLHGGTRQQRYSATKWD). Residues 239 to 258 (VAIAMTIAGFVNLAMMATAA) traverse the membrane as a helical segment. Residues 259 to 276 (AAFHFSGHTGIADLDQAY) are Periplasmic-facing. Residues 277-297 (LTLEPLLSHAAATVFGLSLVA) traverse the membrane as a helical segment. Residues 298-327 (AGLSSTVVGTLAGQVVMQGFVRFHIPLWVR) are Cytoplasmic-facing. The chain crosses the membrane as a helical span at residues 328-344 (RSITMLPSFIVILMGLD). At 345-350 (PTRILV) the chain is on the periplasmic side. A helical transmembrane segment spans residues 351-370 (MSQVLLSFGIALALVPLLIF). Topologically, residues 371 to 387 (TSNATLMGELVNTRRVK) are cytoplasmic. The chain crosses the membrane as a helical span at residues 388–406 (QIGWIIVVLVVALNIWLLV). Over 407-413 (GTVMGLS) the chain is Periplasmic.

This sequence belongs to the NRAMP family.

Its subcellular location is the cell inner membrane. Its function is as follows. H(+)-stimulated, divalent metal cation uptake system. The polypeptide is Divalent metal cation transporter MntH (Salmonella gallinarum (strain 287/91 / NCTC 13346)).